We begin with the raw amino-acid sequence, 350 residues long: S-adenosylmethionine:tRNA ribosyltransferase-isomerase (350 aa).

The protein belongs to the QueA family. As to quaternary structure, monomer.

The protein resides in the cytoplasm. It carries out the reaction 7-aminomethyl-7-carbaguanosine(34) in tRNA + S-adenosyl-L-methionine = epoxyqueuosine(34) in tRNA + adenine + L-methionine + 2 H(+). It participates in tRNA modification; tRNA-queuosine biosynthesis. In terms of biological role, transfers and isomerizes the ribose moiety from AdoMet to the 7-aminomethyl group of 7-deazaguanine (preQ1-tRNA) to give epoxyqueuosine (oQ-tRNA). In Aliivibrio fischeri (strain ATCC 700601 / ES114) (Vibrio fischeri), this protein is S-adenosylmethionine:tRNA ribosyltransferase-isomerase.